We begin with the raw amino-acid sequence, 661 residues long: uncharacterized protein (661 aa).

16 consecutive transmembrane segments (helical) span residues 27 to 47, 68 to 88, 116 to 136, 150 to 170, 179 to 199, 214 to 234, 251 to 271, 279 to 299, 313 to 333, 369 to 389, 396 to 416, 435 to 455, 488 to 508, 519 to 539, 552 to 572, and 599 to 619; these read LAIGLLGVCAVVAAFGLVSGA, VGFFAASLAGALCLGALIHVV, LWLGLAATMVVIQAAHDTGVG, VAASEMARGWIVAAICALVVA, WLGHVVLLVPTVLAVVATAVT, AAIVFAVAFATLTGLKIAAAL, GALALAYGAMLLYLFIPGWAV, GLLAGVILTSVWLFDCWRLLV, GAALAMMAAMASIAAMAVMTA, SLIGAAGVVLAIGYAAGFAAL, WPVGRLIAWLTGCAALVFTSG, MTLNMFIPVLLVLGGPVTLAL, PITAFVLFVASPYIVYFTPLF, EFMAIHFLVVGYLFYWAIIGI, IGLLFAVMPFHAFFGIALMTM, and GGGIAWSLTELPVIMVIVALV.

This sequence to M.leprae ML1998.

It localises to the cell membrane. This is an uncharacterized protein from Mycobacterium tuberculosis (strain CDC 1551 / Oshkosh).